Here is a 429-residue protein sequence, read N- to C-terminus: MKGTVFAVALNHRSQLDAWQEAFSQPPYNAPPKTAVWFIKPRNTVIRHGEPILYPQGEKVLSGATVALIVGKTASRKRSEAAAEYIAGYALANEVSLPEESFYRPAIKAKCRDGFCPLGEMAPLSDVDNLTIITEINGREADHWNTADLQRSAAQLLSALSEFATLNPGDAILLGTPQNRVALRPGDRVRILAKGLPALENPVVAEDEFARNQTFTWPLSATGTLFALGLNYADHASELAFTPPKEPLVFIKAPNTFTEHHQTSVRPNNVEYMHYEAELVVVIGKTARKVSEAEAMEYVAGYTVCNDYAIRDYLENYYRPNLRVKSRDGLTPIGPWIVDKEAVSDPHNLTLRTFVNGELRQEGTTADLIFSIPFLISYLSEFMTLQPGDMIATGTPKGLSDVVPGDEVVLEIKGVGRLVNQIVCEESAN.

2 Approximate repeats span residues 1-215 (MKGT…NQTF) and 216-429 (TWPL…ESAN). The a divalent metal cation site is built by Glu-276, Glu-278, and Asp-307.

Belongs to the FAH family. Monomer. Requires Mg(2+) as cofactor.

The enzyme catalyses (2E,4Z)-5-hydroxypenta-2,4-diene-1,2,5-tricarboxylate = (3E,5R)-5-carboxy-2-oxohept-3-enedioate. It carries out the reaction (3E,5R)-5-carboxy-2-oxohept-3-enedioate + H(+) = (4Z)-2-oxohept-4-enedioate + CO2. Its pathway is aromatic compound metabolism; 4-hydroxyphenylacetate degradation; pyruvate and succinate semialdehyde from 4-hydroxyphenylacetate: step 4/7. It participates in aromatic compound metabolism; 4-hydroxyphenylacetate degradation; pyruvate and succinate semialdehyde from 4-hydroxyphenylacetate: step 5/7. Decarboxylates OPET (5-oxo-pent-3-ene-1,2,5-tricarboxylic acid) into HHDD (2-hydroxy-hept-2,4-diene-1,7-dioate) and isomerizes it to OHED (2-oxo-hept-3-ene-1,7-dioate). The protein is 4-hydroxyphenylacetate degradation bifunctional isomerase/decarboxylase (hpaG) of Salmonella dublin.